The chain runs to 146 residues: 2S sulfur-rich seed storage protein 1 (146 aa).

The signal sequence occupies residues 1 to 22 (MAKISVAAAALLVLMALGHATA). A propeptide spanning residues 23–36 (FRATVTTTVVEEEN) is cleaved from the precursor. Position 37 is a pyrrolidone carboxylic acid (Q37). 4 cysteine pairs are disulfide-bonded: C40–C92, C53–C81, C82–C130, and C94–C137. The propeptide occupies 65–69 (PYQTM). A propeptide spanning residues 143–146 (IAGF) is cleaved from the precursor.

It belongs to the 2S seed storage albumins family. The mature protein consists of a small and a large chain linked by disulfide bonds.

In terms of biological role, this is a 2S seed storage protein. This chain is 2S sulfur-rich seed storage protein 1 (BE2S1), found in Bertholletia excelsa (Brazil nut).